Consider the following 233-residue polypeptide: MIAWLDEDEPFPPVEQALTEPSGLLAASADLPVSRLVTAYRRGIFPWFNPGEPVLWWSPDPRMVLYPAELHVPRSLEKVLRHRRYTVTVDRAFGSVIRACAAPTPARPASWITPEIISTYSQLYRLGLAHSVETWIDGQLAGGFYGVMIGRMFYGESMFAQAPDASKIAFAHLMRRFAGHGIDMIDCQMHTAHLARFGGREIPRSDFVATVNTLTAQPAPPDLWRWSHCNEPA.

The protein belongs to the L/F-transferase family.

The protein resides in the cytoplasm. The catalysed reaction is N-terminal L-lysyl-[protein] + L-leucyl-tRNA(Leu) = N-terminal L-leucyl-L-lysyl-[protein] + tRNA(Leu) + H(+). It carries out the reaction N-terminal L-arginyl-[protein] + L-leucyl-tRNA(Leu) = N-terminal L-leucyl-L-arginyl-[protein] + tRNA(Leu) + H(+). The enzyme catalyses L-phenylalanyl-tRNA(Phe) + an N-terminal L-alpha-aminoacyl-[protein] = an N-terminal L-phenylalanyl-L-alpha-aminoacyl-[protein] + tRNA(Phe). Functionally, functions in the N-end rule pathway of protein degradation where it conjugates Leu, Phe and, less efficiently, Met from aminoacyl-tRNAs to the N-termini of proteins containing an N-terminal arginine or lysine. This is Leucyl/phenylalanyl-tRNA--protein transferase from Laribacter hongkongensis (strain HLHK9).